The chain runs to 1172 residues: WD repeat-containing protein 48 homolog (1172 aa).

Residues 1-115 (MYEYYSTGKI…HSYGGGGGGT (115 aa)) form a disordered region. Residues 13-36 (LPQQVDSNGINSKPMNSSPSTPIP) are compositionally biased toward polar residues. Residues 37–63 (NNNNNNNNNNNNNNNNNNNNNNNNNNN) show a composition bias toward low complexity. Residues 64–89 (RNKSQQSFYLNNNNRNCGFSSPTKPQ) show a composition bias toward polar residues. Residues 90-107 (YNNNNNNNNNNNSNYNHS) show a composition bias toward low complexity. WD repeat units follow at residues 152–202 (RHCF…GFKF), 208–246 (DHTD…CVNS), 249–548 (FHDD…SPMF), 560–599 (GEGI…KIFK), 602–641 (GHTD…CIQV), 645–683 (LHTD…QSRL), and 686–727 (RENE…NQSI). Residues 341-365 (ISTNNNNNNSSSSNNNNNNNNNNNN) are compositionally biased toward low complexity. Positions 341–544 (ISTNNNNNNS…NDNNNLNKKF (204 aa)) are disordered. 3 stretches are compositionally biased toward polar residues: residues 366–377 (GQTNTHENTAET), 388–408 (QLSS…NFRN), and 417–434 (PPSS…SNGR). Over residues 435 to 485 (NVNNRENNNNNNNNNNNNNNNNNNNNNNNNNNNNNNNNNINNNNHENNGNV) the composition is skewed to low complexity. The segment covering 486–503 (DVDDEDDDDDDDDDDDDD) has biased composition (acidic residues). Basic and acidic residues predominate over residues 504-513 (CNKNKKKYDD). The span at 514-543 (NNNNNNYNNNNNKKNNSNDNNNDNNNLNKK) shows a compositional bias: low complexity. Residues 745–769 (NNNNNNNNNNNNNNNNNNNNNNNNN) show a composition bias toward low complexity. Residues 745-775 (NNNNNNNNNNNNNNNNNNNNNNNNNNREKLS) form a disordered region. Residues 794 to 833 (QGRAGIIKNQVLNNRRQVLTKDNDNNVQLWDITKGKEIES) form a WD 8 repeat. The tract at residues 926–986 (ELNHSNDSVN…TNSTTPNSGR (61 aa)) is disordered. A compositionally biased stretch (low complexity) spans 930–984 (SNDSVNSSLSSNTSGDNNNNNYNNYNNYNNNNNNGLQKSSSSSSIVSTNSTTPNS).

Belongs to the WD repeat WDR48 family.

This is WD repeat-containing protein 48 homolog from Dictyostelium discoideum (Social amoeba).